Here is a 190-residue protein sequence, read N- to C-terminus: Probable thymidylate kinase (190 aa).

9–16 (GIDGAGKT) lines the ATP pocket.

The protein belongs to the thymidylate kinase family.

It catalyses the reaction dTMP + ATP = dTDP + ADP. In Sulfurisphaera tokodaii (strain DSM 16993 / JCM 10545 / NBRC 100140 / 7) (Sulfolobus tokodaii), this protein is Probable thymidylate kinase (tmk1).